Here is a 664-residue protein sequence, read N- to C-terminus: Prelamin-A/C (664 aa).

The residue at position 1 (Met1) is an N-acetylmethionine. The disordered stretch occupies residues 1–25; the sequence is METPSQRRATRSGAQASSTPLSPTR. The tract at residues 1–33 is head; sequence METPSQRRATRSGAQASSTPLSPTRITRLQEKE. The interval 1–130 is interaction with MLIP; the sequence is METPSQRRAT…TKKEGDLIAA (130 aa). Thr3 carries the phosphothreonine modification. Ser5 bears the Phosphoserine mark. Residue Thr10 is modified to Phosphothreonine. Residues Ser12 and Ser18 each carry the phosphoserine modification. Thr19 carries the phosphothreonine modification. The residue at position 22 (Ser22) is a Phosphoserine; by CDK1. The IF rod domain maps to 31-387; sequence EKEDLQELND…KLLEGEEERL (357 aa). Lys32 is modified (N6-acetyllysine; alternate). Lys32 is subject to N6-succinyllysine; alternate. A Glycyl lysine isopeptide (Lys-Gly) (interchain with G-Cter in SUMO2); alternate cross-link involves residue Lys32. A coil 1A region spans residues 34–70; that stretch reads DLQELNDRLAVYIDRVRSLETENAGLRLRITESEEVV. Ser51, Ser66, and Ser71 each carry phosphoserine. The tract at residues 71-80 is linker 1; that stretch reads SREVSGIKAA. Residues Lys78 and Lys97 each carry the N6-acetyllysine modification. The segment at 81-218 is coil 1B; it reads YEAELGDARK…NIYSEELRET (138 aa). Residue Lys97 forms a Glycyl lysine isopeptide (Lys-Gly) (interchain with G-Cter in SUMO2) linkage. Residue Ser107 is modified to Phosphoserine. An N6-acetyllysine mark is found at Lys108, Lys114, Lys123, Lys135, Lys144, and Lys155. At Lys171 the chain carries N6-acetyllysine; alternate. An N6-succinyllysine; alternate modification is found at Lys171. Lys171 is covalently cross-linked (Glycyl lysine isopeptide (Lys-Gly) (interchain with G-Cter in SUMO2); alternate). Residues Lys180, Lys201, and Lys208 each carry the N6-acetyllysine modification. Lys201 participates in a covalent cross-link: Glycyl lysine isopeptide (Lys-Gly) (interchain with G-Cter in SUMO2); alternate. Residue Lys201 forms a Glycyl lysine isopeptide (Lys-Gly) (interchain with G-Cter in SUMO); alternate linkage. Residue Lys208 forms a Glycyl lysine isopeptide (Lys-Gly) (interchain with G-Cter in SUMO2) linkage. Ser212 carries the post-translational modification Phosphoserine. Glycyl lysine isopeptide (Lys-Gly) (interchain with G-Cter in SUMO2) cross-links involve residues Lys219 and Lys233. Positions 219-242 are linker 2; the sequence is KRRHETRLVEIDNGKQREFESRLA. Residues Lys233, Lys260, Lys265, and Lys270 each carry the N6-acetyllysine modification. Positions 243–383 are coil 2; that stretch reads DALQELRAQH…HAYRKLLEGE (141 aa). The interval 259-331 is necessary and sufficient for the interaction with IFFO1; that stretch reads YKKELEKTYS…DLEDSLARER (73 aa). A Glycyl lysine isopeptide (Lys-Gly) (interchain with G-Cter in SUMO2); alternate cross-link involves residue Lys260. Lys270 is covalently cross-linked (Glycyl lysine isopeptide (Lys-Gly) (interchain with G-Cter in SUMO2); alternate). Position 277 is a phosphoserine (Ser277). A Phosphoserine; by ATR modification is found at Ser282. Phosphoserine occurs at positions 301 and 307. Lys311 participates in a covalent cross-link: Glycyl lysine isopeptide (Lys-Gly) (interchain with G-Cter in SUMO2); alternate. Lys311, Lys316, and Lys341 each carry N6-acetyllysine. Residues Lys366 and Lys378 each participate in a glycyl lysine isopeptide (Lys-Gly) (interchain with G-Cter in SUMO2) cross-link. The tract at residues 384–442 is disordered; it reads EERLRLSPSPTSQRSRGRASSHSSQTQGGGSVTKKRKLESTESRSSFSQHARTSGRVAV. The tail stretch occupies residues 384–664; sequence EERLRLSPSP…TQSPQNCSIM (281 aa). Ser390 carries the post-translational modification Phosphoserine. The residue at position 392 (Ser392) is a Phosphoserine; by CDK1. Ser395 carries the phosphoserine; by ATR modification. 6 positions are modified to phosphoserine: Ser398, Ser403, Ser404, Ser406, Ser407, and Ser414. Thr416 is modified (phosphothreonine). At Lys417 the chain carries N6-acetyllysine. Glycyl lysine isopeptide (Lys-Gly) (interchain with G-Cter in SUMO2) cross-links involve residues Lys417 and Lys420. A Nuclear localization signal motif is present at residues 417–422; sequence KKRKLE. Ser423, Ser426, Ser429, and Ser431 each carry phosphoserine. Positions 426-435 are enriched in polar residues; that stretch reads SRSSFSQHAR. One can recognise an LTD domain in the interval 428 to 545; sequence SSFSQHARTS…EEVAMRKLVR (118 aa). Lys450 participates in a covalent cross-link: Glycyl lysine isopeptide (Lys-Gly) (interchain with G-Cter in SUMO2); alternate. An N6-acetyllysine mark is found at Lys450 and Lys457. Phosphoserine is present on residues Ser458 and Ser463. Residues Lys470 and Lys486 each participate in a glycyl lysine isopeptide (Lys-Gly) (interchain with G-Cter in SUMO2) cross-link. At Lys486 the chain carries N6-acetyllysine. Thr496, Thr505, and Thr510 each carry phosphothreonine. Phosphoserine occurs at positions 533 and 546. The residue at position 548 (Thr548) is a Phosphothreonine. The tract at residues 552-576 is disordered; that stretch reads DDEDEDGDDLLHHHHGSHCSSSGDP. Phosphoserine occurs at positions 568 and 571. Lys597 participates in a covalent cross-link: Glycyl lysine isopeptide (Lys-Gly) (interchain with G-Cter in SUMO2); alternate. Residue Lys597 forms a Glycyl lysine isopeptide (Lys-Gly) (interchain with G-Cter in SUMO1); alternate linkage. The interval 598–619 is disordered; the sequence is ASASGSGAQVGGPISSGSSASS. Phosphoserine is present on residues Ser612, Ser613, Ser616, and Ser619. 2 O-linked (GlcNAc) serine glycosylation sites follow: Ser625 and Ser628. Residues Ser628, Ser632, Ser636, and Ser652 each carry the phosphoserine modification. Residues 647–661 constitute a propeptide, removed in Lamin-A/C form; sequence LLGNSSPRTQSPQNC. Residue Cys661 is modified to Cysteine methyl ester. Cys661 carries the S-farnesyl cysteine lipid modification. Positions 662 to 664 are cleaved as a propeptide — removed in Prelamin-A/C form and in Lamin-A/C form; the sequence is SIM.

It belongs to the intermediate filament family. Homodimer of lamin A and lamin C. Lamin dimers then assemble into dimeric head-to-tail polymers. Ultimately, two head-to-tail polymers assemble laterally into a protofilament with a uniformly shaped rod of 3.5 nm in diameter. Interacts with lamin-associated polypeptides IA, IB and TMPO-alpha, RB1 and with emerin. Interacts with SREBF1, SREBF2, SUN2 and TMEM43. Interacts with TMEM201. Proteolytically processed isoform A interacts with NARF. Interacts with SUN1. Interacts with MLIP. Interacts with DMPK; may regulate nuclear envelope stability. Interacts with SUV39H1; the interaction increases stability of SUV39H1. Interacts with SYNE2. Interacts with ITSN1 isoform 2. Interacts with IFFO1; enables the formation of an interior nucleoskeleton that is recruited to DNA double-strand breaks. In terms of assembly, interacts with EMD. As to quaternary structure, interacts (via C-terminus) with LEMD2 (via N-terminus) (in vitro). In terms of processing, proteolytic cleavage of the C-terminal of 18 residues of prelamin-A/C results in the production of lamin-A/C. The prelamin-A/C maturation pathway includes farnesylation of CAAX motif by protein farnesyltransferase (FNTA and FNTB), removal of the last three amino acids (-AAX) by RCE1/FACE2 and/or ZMPSTE24, methylation of the C-terminal cysteine by ICMT and endoproteolytic removal of the last 15 C-terminal amino acids by ZMPSTE24. Proteolytic cleavage requires prior farnesylation and methylation, and absence of these blocks cleavage. Farnesylation of prelamin-A/C facilitates nuclear envelope targeting. Post-translationally, phosphorylation plays a key role in lamin organization, subcellular localization and nuclear envelope disintegration. Phosphorylation by CDK1 at Ser-22 and Ser-392 at the onset of mitosis drives lamin disassembly and nuclear envelope breakdown. Phosphorylation at Ser-22 and Ser-392 during interphase promotes localization to the nucleoplasm and regulates lamina assembly. Phosphorylation at Ser-22, Ser-392 and Ser-628 during interphase causes redistribution between the nucleus and the cytoplasm. Phosphorylation at Ser-22 by CDK1 regulates matrix stiffness. Phosphorylation status of Ser-22 determines its localization between double-strand break (DSB) sites and the nuclear matrix. Phosphorylated by ATR at Ser-282 in response to DNA damage, leading to lamin disassembly and nuclear envelope rupture. Phosphorylation also regulates stability in micronuclei arising from genome instability: phosphorylation at Ser-395 by ATR in response to genome instability and double-stranded DNA breaks primes LMNA for subsequent phosphorylation at Ser-392 by CDK1 and micronuclei envelope rupture. The rupture of micronuclear envelope triggers the cGAS-STING pathway thereby activating the type I interferon response and innate immunity. In terms of processing, acetylation by KAT8 is required for nuclear architecture. Sumoylation is necessary for the localization to the nuclear envelope. In terms of tissue distribution, in the arteries, prelamin-A/C accumulation is not observed in young healthy vessels but is prevalent in medial vascular smooth muscle cells (VSMCs) from aged individuals and in atherosclerotic lesions, where it often colocalizes with senescent and degenerate VSMCs. Prelamin-A/C expression increases with age and disease. In normal aging, the accumulation of prelamin-A/C is caused in part by the down-regulation of ZMPSTE24/FACE1 in response to oxidative stress.

It localises to the nucleus lamina. It is found in the nucleus envelope. The protein localises to the nucleus. Its subcellular location is the nucleoplasm. The protein resides in the nucleus matrix. It localises to the nucleus speckle. Functionally, lamins are intermediate filament proteins that assemble into a filamentous meshwork, and which constitute the major components of the nuclear lamina, a fibrous layer on the nucleoplasmic side of the inner nuclear membrane. Lamins provide a framework for the nuclear envelope, bridging the nuclear envelope and chromatin, thereby playing an important role in nuclear assembly, chromatin organization, nuclear membrane and telomere dynamics. Lamin A and C also regulate matrix stiffness by conferring nuclear mechanical properties. The structural integrity of the lamina is strictly controlled by the cell cycle, as seen by the disintegration and formation of the nuclear envelope in prophase and telophase, respectively. Lamin A and C are present in equal amounts in the lamina of mammals. Also invoved in DNA repair: recruited by DNA repair proteins XRCC4 and IFFO1 to the DNA double-strand breaks (DSBs) to prevent chromosome translocation by immobilizing broken DNA ends. Required for normal development of peripheral nervous system and skeletal muscle and for muscle satellite cell proliferation. Required for osteoblastogenesis and bone formation. Also prevents fat infiltration of muscle and bone marrow, helping to maintain the volume and strength of skeletal muscle and bone. Required for cardiac homeostasis. Prelamin-A/C can accelerate smooth muscle cell senescence. It acts to disrupt mitosis and induce DNA damage in vascular smooth muscle cells (VSMCs), leading to mitotic failure, genomic instability, and premature senescence. In Homo sapiens (Human), this protein is Prelamin-A/C (LMNA).